Here is a 348-residue protein sequence, read N- to C-terminus: Protein-glutamate methylesterase/protein-glutamine glutaminase 2 (348 aa).

A Response regulatory domain is found at 5 to 122; sequence KVLIIDDSAL…DLGLSQYRDE (118 aa). Aspartate 56 carries the 4-aspartylphosphate modification. One can recognise a CheB-type methylesterase domain in the interval 157–348; that stretch reads SLKTGFLCAI…AANIIKHALK (192 aa). Active-site residues include serine 169, histidine 195, and aspartate 291.

This sequence belongs to the CheB family. In terms of processing, phosphorylated by CheA. Phosphorylation of the N-terminal regulatory domain activates the methylesterase activity.

It localises to the cytoplasm. The enzyme catalyses [protein]-L-glutamate 5-O-methyl ester + H2O = L-glutamyl-[protein] + methanol + H(+). The catalysed reaction is L-glutaminyl-[protein] + H2O = L-glutamyl-[protein] + NH4(+). Involved in chemotaxis. Part of a chemotaxis signal transduction system that modulates chemotaxis in response to various stimuli. Catalyzes the demethylation of specific methylglutamate residues introduced into the chemoreceptors (methyl-accepting chemotaxis proteins or MCP) by CheR. Also mediates the irreversible deamidation of specific glutamine residues to glutamic acid. The chain is Protein-glutamate methylesterase/protein-glutamine glutaminase 2 from Saccharophagus degradans (strain 2-40 / ATCC 43961 / DSM 17024).